The sequence spans 667 residues: Trifunctional UDP-glucose 4,6-dehydratase/UDP-4-keto-6-deoxy-D-glucose 3,5-epimerase/UDP-4-keto-L-rhamnose-reductase RHM2 (667 aa).

15–21 lines the NAD(+) pocket; that stretch reads GAAGFIA. Thr134 lines the substrate pocket. Asp135 serves as the catalytic Proton donor. Residues Glu136 and Tyr161 each act as proton acceptor in the active site. Residue 389-395 coordinates NADP(+); sequence GKTGWLG.

The protein in the N-terminal section; belongs to the NAD(P)-dependent epimerase/dehydratase family. dTDP-glucose dehydratase subfamily. This sequence in the C-terminal section; belongs to the dTDP-4-dehydrorhamnose reductase family. The cofactor is NAD(+). NADP(+) serves as cofactor. As to expression, expressed in roots, stems, leaves, seedlings, inflorescence tips, and siliques.

The enzyme catalyses UDP-alpha-D-glucose = UDP-4-dehydro-6-deoxy-alpha-D-glucose + H2O. It functions in the pathway carbohydrate biosynthesis. Trifunctional enzyme involved in UDP-beta-L-rhamnose biosynthesis, a precursor of the primary cell wall components rhamnogalacturonan I (RG-I) and rhamnogalacturonan II (RG-II). Catalyzes the dehydration of UDP-glucose to form UDP-4-dehydro-6-deoxy-D-glucose followed by the epimerization of the C3' and C5' positions of UDP-4-dehydro-6-deoxy-D-glucose to form UDP-4-keto-beta-L-rhamnose and the reduction of UDP-4-keto-beta-L-rhamnose to yield UDP-beta-L-rhamnose. Required for the normal seed coat epidermal development. The protein is Trifunctional UDP-glucose 4,6-dehydratase/UDP-4-keto-6-deoxy-D-glucose 3,5-epimerase/UDP-4-keto-L-rhamnose-reductase RHM2 of Arabidopsis thaliana (Mouse-ear cress).